A 4690-amino-acid polypeptide reads, in one-letter code: Nonribosomal peptide synthetase sidN (4690 aa).

The adenylation 1 stretch occupies residues 238–656; it reads ARVRENPGRI…LGRLSSDQIK (419 aa). Residues 779–856 enclose the Carrier 1 domain; that stretch reads SSSIPMLQSV…DLDTKAQQAL (78 aa). Ser-816 bears the O-(pantetheine 4'-phosphoryl)serine mark. The tract at residues 925–1175 is condensation 1; it reads PGGKAFIQHT…AFGNTMSGRF (251 aa). The segment at 1349–1760 is adenylation 2; sequence EFAQKSPNAI…GRKDDLVKIR (412 aa). Residues 1889-1965 enclose the Carrier 2 domain; the sequence is PAWCIKHRPL…DLINHLSVKR (77 aa). An O-(pantetheine 4'-phosphoryl)serine modification is found at Ser-1926. The segment at 2001-2285 is condensation 2; sequence PTTVFQDGML…SERLLESQLV (285 aa). The adenylation 3 stretch occupies residues 2464–2869; it reads TWAKTHPEWK…GRKDEQVKVR (406 aa). The 78-residue stretch at 3002–3079 folds into the Carrier 3 domain; sequence RDLTSIEKQI…ELGRMKNALK (78 aa). Ser-3040 is modified (O-(pantetheine 4'-phosphoryl)serine). The condensation 3 stretch occupies residues 3121–3530; sequence CMPLQEVLVA…QMESLVTSFT (410 aa). Residues 3564–3637 form the Carrier 4 domain; that stretch reads SVLEQQIRDV…KLATHIQTTS (74 aa). O-(pantetheine 4'-phosphoryl)serine is present on Ser-3598. A condensation 4 region spans residues 3679 to 4087; the sequence is VYPLTPLQAG…FESIRKHPDE (409 aa). One can recognise a Carrier 5 domain in the interval 4119–4195; sequence SAIDQFLDPL…KLCEVAFAKS (77 aa). Ser-4156 carries the post-translational modification O-(pantetheine 4'-phosphoryl)serine. Residues 4262–4589 form a condensation 5 region; the sequence is WVFKAENGLD…FNAHLNILWN (328 aa).

This sequence belongs to the NRP synthetase family.

The protein operates within siderophore biosynthesis. Its function is as follows. Nonribosomal peptide synthetase required for the biosynthetis of epichloenin A, an extracellular siderophore that plays a crucial role in endophyte-grass symbioses. SidN assembles epichloenin A by activating and incorporating three trans-anhydromevalonylhydroxyornithine (trans-AMHO), 1 glutamine and 4 glycine moieties. Trans-AMHO is produced from L-ornithine via 2 steps involving a L-ornithine N(5)-monooxygenase and an AHMO-N(5)-transacylase that have still to be identified. The third adenylation domain (A3) of sidN incorporates the hydroxamate groups of the siderophore which forms an octahedral iron complex. The other component amino acids are assembled by sidN adenylation domains A1 and A2. This is Nonribosomal peptide synthetase sidN from Epichloe festucae (strain E2368).